Reading from the N-terminus, the 218-residue chain is 3-oxo-tetronate 4-phosphate decarboxylase (218 aa).

The active-site Proton acceptor is the E86. Zn(2+)-binding residues include E86, H105, and H107. Y132 serves as the catalytic Proton donor. H172 contacts Zn(2+).

The protein belongs to the aldolase class II family. AraD/FucA subfamily. Zn(2+) serves as cofactor.

It catalyses the reaction 3-dehydro-4-O-phospho-D-erythronate + H(+) = dihydroxyacetone phosphate + CO2. The enzyme catalyses 3-dehydro-4-O-phospho-L-erythronate + H(+) = dihydroxyacetone phosphate + CO2. Its function is as follows. Catalyzes the decarboxylation of 3-oxo-tetronate 4-phosphate to dihydroxyacetone phosphate (DHAP) and CO(2). This Pectobacterium atrosepticum (strain SCRI 1043 / ATCC BAA-672) (Erwinia carotovora subsp. atroseptica) protein is 3-oxo-tetronate 4-phosphate decarboxylase.